Here is a 131-residue protein sequence, read N- to C-terminus: Small ribosomal subunit protein uS8c (131 aa).

The protein belongs to the universal ribosomal protein uS8 family. Part of the 30S ribosomal subunit.

Its subcellular location is the plastid. The protein resides in the chloroplast. Its function is as follows. One of the primary rRNA binding proteins, it binds directly to 16S rRNA central domain where it helps coordinate assembly of the platform of the 30S subunit. The chain is Small ribosomal subunit protein uS8c (rps8) from Tupiella akineta (Green alga).